Consider the following 982-residue polypeptide: Glycine dehydrogenase (decarboxylating) (982 aa).

Lys-721 carries the post-translational modification N6-(pyridoxal phosphate)lysine.

Belongs to the GcvP family. In terms of assembly, the glycine cleavage system is composed of four proteins: P, T, L and H. Pyridoxal 5'-phosphate is required as a cofactor.

The catalysed reaction is N(6)-[(R)-lipoyl]-L-lysyl-[glycine-cleavage complex H protein] + glycine + H(+) = N(6)-[(R)-S(8)-aminomethyldihydrolipoyl]-L-lysyl-[glycine-cleavage complex H protein] + CO2. Its function is as follows. The glycine cleavage system catalyzes the degradation of glycine. The P protein binds the alpha-amino group of glycine through its pyridoxal phosphate cofactor; CO(2) is released and the remaining methylamine moiety is then transferred to the lipoamide cofactor of the H protein. The protein is Glycine dehydrogenase (decarboxylating) of Prochlorococcus marinus (strain MIT 9303).